The primary structure comprises 892 residues: Ice-binding protein 1 (892 aa).

The first 23 residues, 1 to 23 (MNHSIKKTYLVFTMLLGFILLAG), serve as a signal peptide directing secretion. The N-palmitoyl cysteine moiety is linked to residue C24. C24 carries S-diacylglycerol cysteine lipidation. 7 consecutive BIG2 domains span residues 43 to 111 (TSIA…ITAS), 134 to 205 (TALA…SLGS), 221 to 288 (SIAL…ITAD), 306 to 386 (TSIM…TVTV), 392 to 471 (TSIA…TNLT), 478 to 558 (NSIV…NLTV), and 565 to 638 (SIDV…QASL). The short motif at 866 to 869 (TGAN) is the Ice-binding site motif (T-A/G-X-T/N) element.

It belongs to the ice-binding protein family.

Its subcellular location is the cell outer membrane. Ice-binding adhesion protein that adsorbs this bacterium onto ice to maintain a favorable position in its aquatic habitat. Inhibits growth of the ice crystals. Has high thermal hysteresis (TH) activity, which is the ability to lower the freezing point of an aqueous solution below its melting point. The TH activity of this protein is approximately 1.4 degrees Celsius at 25 uM and little below 2 degrees Celsius at 80 uM. The protein is Ice-binding protein 1 of Shewanella frigidimarina (strain NCIMB 400).